The sequence spans 225 residues: Transmembrane protein 225 (225 aa).

At 1–8 the chain is on the cytoplasmic side; sequence MVHVSNRS. A helical membrane pass occupies residues 9–29; that stretch reads IQGMNILFSSWAVVLMVMGIT. Topologically, residues 30–72 are extracellular; sequence LDKWVELISEDERAKMNHSPWMMCCPALWPEDDLKVVRIMMTS. A helical transmembrane segment spans residues 73 to 93; sequence SLGLSFLLNLILGMKFTYLIP. The Cytoplasmic portion of the chain corresponds to 94–99; sequence QNKYIQ. Residues 100-120 form a helical membrane-spanning segment; sequence LFTTILSFFSGISLLWALILY. Topologically, residues 121 to 136 are extracellular; it reads HNKLKQGQSMHFSSYR. Residues 137–157 traverse the membrane as a helical segment; sequence ITWIMYTAYLNVFFLSVCGVL. At 158–225 the chain is on the cytoplasmic side; the sequence is SLLECKLSTS…VQTRHVTWAL (68 aa). An RVxF motif is present at residues 219-223; the sequence is RHVTW.

As to quaternary structure, interacts (via RVxF motif) with PPP1CC.

Its subcellular location is the cytoplasmic vesicle. It localises to the secretory vesicle. The protein localises to the acrosome membrane. In terms of biological role, probably inhibits protein phosphatase 1 (PP1) in sperm via binding to catalytic subunit PPP1CC. The polypeptide is Transmembrane protein 225 (TMEM225) (Homo sapiens (Human)).